We begin with the raw amino-acid sequence, 810 residues long: Type I restriction enzyme EcoAI endonuclease subunit (810 aa).

Positions 183-343 (EAVSNGQNRV…TDYFGDPVYV (161 aa)) constitute a Helicase ATP-binding domain. ATP is bound at residue 197 to 203 (ATGTGKT). Residues 412-575 (TITDYLKRTN…DIADPESDFE (164 aa)) enclose the Helicase C-terminal domain. The span at 578 to 588 (LEEISEHDEEQ) shows a compositional bias: acidic residues. The disordered stretch occupies residues 578 to 608 (LEEISEHDEEQVTGVDEPPAPPYQVTDTDDV).

The protein belongs to the HsdR family. In terms of assembly, the type I restriction/modification system is composed of three polypeptides R, M and S. The restriction enzyme has stoichiometry R(2)M(2)S(1) while the methyltransferase is M(2)S(1).

The catalysed reaction is Endonucleolytic cleavage of DNA to give random double-stranded fragments with terminal 5'-phosphates, ATP is simultaneously hydrolyzed.. In terms of biological role, the subtype B restriction (R) subunit of a type I restriction enzyme that recognizes 5'-GAGN(7)GTCA-3' and cleaves a random distance away. Subunit R is required for both nuclease and ATPase activities, but not for modification. After locating a non-methylated recognition site, the enzyme complex serves as a molecular motor that translocates DNA in an ATP-dependent manner until a collision occurs that triggers cleavage. The polypeptide is Type I restriction enzyme EcoAI endonuclease subunit (Escherichia coli).